A 149-amino-acid chain; its full sequence is MKSTLRISLKSGERIFVNGAVLRVDRKVAIEFLNDVTFLLENHVLQPEDATTPLRQLYFIAQMILINPEGADQSTSMFRKSIVMLVNCFRNDEVLAELKRIDGLVTQGRAFEALKAIRALYPIEDQILNAQEMTPATVEQIRKEIAPWR.

Belongs to the FlbT family.

In terms of biological role, has a post-transcriptional repressor function in flagellum biogenesis. Associates with the 5'-UTR of fljK mRNA and promotes its degradation. This chain is Probable flagellum biosynthesis repressor protein FlbT, found in Sinorhizobium medicae (strain WSM419) (Ensifer medicae).